Here is a 459-residue protein sequence, read N- to C-terminus: Glycosyl hydrolase family 109 protein 1 (459 aa).

Residues 1–31 (MHNIHRRHFLKAAGAVTAGLVTANIALNANA) constitute a signal peptide (tat-type signal). NAD(+) contacts are provided by residues 64–65 (ER), D86, 135–138 (WEWH), 155–156 (EV), and N184. Residues Y213, R232, 244-247 (YPTH), and Y326 contribute to the substrate site. Residue Y244 participates in NAD(+) binding.

The protein belongs to the Gfo/Idh/MocA family. Glycosyl hydrolase 109 subfamily. Requires NAD(+) as cofactor. Predicted to be exported by the Tat system. The position of the signal peptide cleavage has not been experimentally proven.

Its function is as follows. Glycosidase. The sequence is that of Glycosyl hydrolase family 109 protein 1 from Shewanella sp. (strain MR-4).